The chain runs to 21 residues: Trypsin (21 aa).

Residues 1–7 (FPIEEDK) constitute a propeptide, activation peptide. One can recognise a Peptidase S1 domain in the interval 8–21 (IVGGYECPKHXVPW).

This sequence belongs to the peptidase S1 family.

The protein localises to the secreted. Its subcellular location is the extracellular space. It carries out the reaction Preferential cleavage: Arg-|-Xaa, Lys-|-Xaa.. The sequence is that of Trypsin from Protopterus aethiopicus (Marbled lungfish).